Here is a 228-residue protein sequence, read N- to C-terminus: MTTWANMNLQDSASPIMEQLIYFHDHALMIIIMILMVVSYMMIAMVFNKYINRFLLEGQMIELAWTIAPAVILIFIAVPSLRLLYLMDEINTPTVTLKTIGHQWYWSYEYSDFAKVEFDSYMIPQDEMDHSMFRLLDVDNRAVLPMNTFIRIIVTAADVLHSWTIPSLGVKADATPGRLNQVSFLINRPGVLYGQCSEICGANHSFMPIVIESISTNGFINWILKMNM.

Residues 1-26 (MTTWANMNLQDSASPIMEQLIYFHDH) are Mitochondrial intermembrane-facing. Residues 27–48 (ALMIIIMILMVVSYMMIAMVFN) form a helical membrane-spanning segment. Residues 49–62 (KYINRFLLEGQMIE) lie on the Mitochondrial matrix side of the membrane. Residues 63–82 (LAWTIAPAVILIFIAVPSLR) form a helical membrane-spanning segment. The Mitochondrial intermembrane segment spans residues 83–228 (LLYLMDEINT…FINWILKMNM (146 aa)). Residues His161, Cys196, Glu198, Cys200, His204, and Met207 each coordinate Cu cation. Glu198 provides a ligand contact to Mg(2+).

It belongs to the cytochrome c oxidase subunit 2 family. In terms of assembly, component of the cytochrome c oxidase (complex IV, CIV), a multisubunit enzyme composed of a catalytic core of 3 subunits and several supernumerary subunits. The complex exists as a monomer or a dimer and forms supercomplexes (SCs) in the inner mitochondrial membrane with ubiquinol-cytochrome c oxidoreductase (cytochrome b-c1 complex, complex III, CIII). The cofactor is Cu cation.

The protein resides in the mitochondrion inner membrane. It catalyses the reaction 4 Fe(II)-[cytochrome c] + O2 + 8 H(+)(in) = 4 Fe(III)-[cytochrome c] + 2 H2O + 4 H(+)(out). Functionally, component of the cytochrome c oxidase, the last enzyme in the mitochondrial electron transport chain which drives oxidative phosphorylation. The respiratory chain contains 3 multisubunit complexes succinate dehydrogenase (complex II, CII), ubiquinol-cytochrome c oxidoreductase (cytochrome b-c1 complex, complex III, CIII) and cytochrome c oxidase (complex IV, CIV), that cooperate to transfer electrons derived from NADH and succinate to molecular oxygen, creating an electrochemical gradient over the inner membrane that drives transmembrane transport and the ATP synthase. Cytochrome c oxidase is the component of the respiratory chain that catalyzes the reduction of oxygen to water. Electrons originating from reduced cytochrome c in the intermembrane space (IMS) are transferred via the dinuclear copper A center (CU(A)) of subunit 2 and heme A of subunit 1 to the active site in subunit 1, a binuclear center (BNC) formed by heme A3 and copper B (CU(B)). The BNC reduces molecular oxygen to 2 water molecules using 4 electrons from cytochrome c in the IMS and 4 protons from the mitochondrial matrix. The chain is Cytochrome c oxidase subunit 2 (COII) from Periplaneta americana (American cockroach).